The following is a 58-amino-acid chain: Large ribosomal subunit protein bL32 (58 aa).

This sequence belongs to the bacterial ribosomal protein bL32 family.

In Anaplasma marginale (strain Florida), this protein is Large ribosomal subunit protein bL32.